Here is a 317-residue protein sequence, read N- to C-terminus: Transaldolase (317 aa).

The active-site Schiff-base intermediate with substrate is K126.

Belongs to the transaldolase family. Type 1 subfamily. As to quaternary structure, homodimer.

The protein resides in the cytoplasm. It carries out the reaction D-sedoheptulose 7-phosphate + D-glyceraldehyde 3-phosphate = D-erythrose 4-phosphate + beta-D-fructose 6-phosphate. It participates in carbohydrate degradation; pentose phosphate pathway; D-glyceraldehyde 3-phosphate and beta-D-fructose 6-phosphate from D-ribose 5-phosphate and D-xylulose 5-phosphate (non-oxidative stage): step 2/3. Its function is as follows. Transaldolase is important for the balance of metabolites in the pentose-phosphate pathway. This is Transaldolase from Burkholderia orbicola (strain AU 1054).